The primary structure comprises 379 residues: GPN-loop GTPase QQT2 (379 aa).

At M1 the chain carries N-acetylmethionine. 51–56 (GSGKTS) contacts GTP. Positions 108-110 (GPN) match the Gly-Pro-Asn (GPN)-loop; involved in dimer interface motif. Residues 211-214 (NKTD) and A267 each bind GTP. Residues 288-322 (METYKADLDMRKADKERLEEERKKHEMEKLRKDME) are a coiled coil. Basic and acidic residues-rich tracts occupy residues 303–322 (ERLE…KDME) and 335–346 (LKDRDATEKMML). Residues 303–379 (ERLEEERKKH…EDDETKHYYL (77 aa)) are disordered. The span at 347–372 (EEDDEDFQVEDEEDSDDAIDEDDEDD) shows a compositional bias: acidic residues.

It belongs to the GPN-loop GTPase family. As to quaternary structure, heterodimer with QQT1. As to expression, expressed in individual cells of roots, leaves and flowers.

It localises to the cytoplasm. Its subcellular location is the nucleus. The protein localises to the cytoskeleton. The protein resides in the spindle. It is found in the phragmoplast. Functionally, small GTPase that is essential for the correct formation of the tangential divisions in early embryos. Associates with microtubule during mitosis and may function in the positioning of the division plane. May participate in the patterning of the early embryo at the octant-dermatogen transition. This Arabidopsis thaliana (Mouse-ear cress) protein is GPN-loop GTPase QQT2.